The sequence spans 134 residues: Replication enhancer protein (134 aa).

Belongs to the geminiviridae replication enhancer protein family. As to quaternary structure, homooligomer. Interacts with the replication-associated protein (REP). Interacts with host proliferating cell nuclear antigen (PCNA). Interacts with host retinoblastoma-related protein 1 (RBR1), and may thereby deregulate the host cell cycle. Oligomerization and interaction with PCNA are necessary for optimal replication enhancement.

Functionally, increases viral DNA accumulation. Enhances infectivity and symptom expression. The protein is Replication enhancer protein of Nicotiana tabacum (Common tobacco).